The chain runs to 253 residues: Major prion protein (253 aa).

An N-terminal signal peptide occupies residues methionine 1–cysteine 22. Residues lysine 23–tyrosine 38 form an interaction with ADGRG6 region. Residues lysine 23 to serine 230 are interaction with GRB2, ERI3 and SYN1. Residues proline 26–asparagine 108 form a disordered region. 5 tandem repeats follow at residues proline 51 to glutamine 59, proline 60 to glutamine 67, proline 68 to glutamine 75, proline 76 to glutamine 83, and proline 84 to glutamine 91. The interval proline 51–glutamine 91 is 5 X 8 AA tandem repeats of P-H-G-G-G-W-G-Q. Over residues glutamine 52–threonine 95 the composition is skewed to gly residues. The Cu(2+) site is built by histidine 61, glycine 62, glycine 63, histidine 69, glycine 70, glycine 71, histidine 77, glycine 78, glycine 79, histidine 85, glycine 86, and glycine 87. A disulfide bridge connects residues cysteine 179 and cysteine 214. N-linked (GlcNAc...) asparagine glycosylation is found at asparagine 181 and asparagine 197. Serine 230 is lipidated: GPI-anchor amidated serine. A propeptide spans serine 231 to glycine 253 (removed in mature form).

Belongs to the prion family. Monomer and homodimer. Has a tendency to aggregate into amyloid fibrils containing a cross-beta spine, formed by a steric zipper of superposed beta-strands. Soluble oligomers may represent an intermediate stage on the path to fibril formation. Copper binding may promote oligomerization. Interacts with GRB2, APP, ERI3/PRNPIP and SYN1. Mislocalized cytosolically exposed PrP interacts with MGRN1; this interaction alters MGRN1 subcellular location and causes lysosomal enlargement. Interacts with KIAA1191. Interacts with ADGRG6. Post-translationally, the glycosylation pattern (the amount of mono-, di- and non-glycosylated forms or glycoforms) seems to differ in normal and CJD prion.

The protein localises to the cell membrane. It localises to the golgi apparatus. In terms of biological role, its primary physiological function is unclear. May play a role in neuronal development and synaptic plasticity. May be required for neuronal myelin sheath maintenance. May promote myelin homeostasis through acting as an agonist for ADGRG6 receptor. May play a role in iron uptake and iron homeostasis. Soluble oligomers are toxic to cultured neuroblastoma cells and induce apoptosis (in vitro). Association with GPC1 (via its heparan sulfate chains) targets PRNP to lipid rafts. Also provides Cu(2+) or Zn(2+) for the ascorbate-mediated GPC1 deaminase degradation of its heparan sulfate side chains. The sequence is that of Major prion protein (PRNP) from Homo sapiens (Human).